A 712-amino-acid chain; its full sequence is DNA topoisomerase 3 (712 aa).

Residues 2-135 (KSLIIAEKPS…TKRLWISSVT (134 aa)) form the Toprim domain. Positions 8 and 104 each coordinate Mg(2+). The 430-residue stretch at 152 to 581 (FNNLYHAALA…EMKAFTNQVV (430 aa)) folds into the Topo IA-type catalytic domain. Residues 186–191 (SLGRVQ) form an interaction with DNA region. Residue Tyr305 is the O-(5'-phospho-DNA)-tyrosine intermediate of the active site.

This sequence belongs to the type IA topoisomerase family. The cofactor is Mg(2+).

The enzyme catalyses ATP-independent breakage of single-stranded DNA, followed by passage and rejoining.. Its function is as follows. Releases the supercoiling and torsional tension of DNA, which is introduced during the DNA replication and transcription, by transiently cleaving and rejoining one strand of the DNA duplex. Introduces a single-strand break via transesterification at a target site in duplex DNA. The scissile phosphodiester is attacked by the catalytic tyrosine of the enzyme, resulting in the formation of a DNA-(5'-phosphotyrosyl)-enzyme intermediate and the expulsion of a 3'-OH DNA strand. The free DNA strand then undergoes passage around the unbroken strand, thus removing DNA supercoils. Finally, in the religation step, the DNA 3'-OH attacks the covalent intermediate to expel the active-site tyrosine and restore the DNA phosphodiester backbone. This is DNA topoisomerase 3 from Staphylococcus saprophyticus subsp. saprophyticus (strain ATCC 15305 / DSM 20229 / NCIMB 8711 / NCTC 7292 / S-41).